Reading from the N-terminus, the 608-residue chain is Isocitrate dehydrogenase kinase/phosphatase (608 aa).

Residues 328–334 and Lys-349 each bind ATP; that span reads APGIKGL. Residue Asp-384 is part of the active site.

This sequence belongs to the AceK family.

Its subcellular location is the cytoplasm. The enzyme catalyses L-seryl-[isocitrate dehydrogenase] + ATP = O-phospho-L-seryl-[isocitrate dehydrogenase] + ADP + H(+). In terms of biological role, bifunctional enzyme which can phosphorylate or dephosphorylate isocitrate dehydrogenase (IDH) on a specific serine residue. This is a regulatory mechanism which enables bacteria to bypass the Krebs cycle via the glyoxylate shunt in response to the source of carbon. When bacteria are grown on glucose, IDH is fully active and unphosphorylated, but when grown on acetate or ethanol, the activity of IDH declines drastically concomitant with its phosphorylation. The sequence is that of Isocitrate dehydrogenase kinase/phosphatase from Cupriavidus pinatubonensis (strain JMP 134 / LMG 1197) (Cupriavidus necator (strain JMP 134)).